Reading from the N-terminus, the 183-residue chain is Lipid droplet coating protein Cap20 (183 aa).

Belongs to the perilipin family.

It is found in the lipid droplet. Lipid droplet coating protein that regulates lipid metabolism, appressorial turgor pressure, and virulence. Appressorial turgor pressure is important for the mechanical penetration of the host cuticle during infection. This is Lipid droplet coating protein Cap20 (Cap20) from Colletotrichum gloeosporioides (Anthracnose fungus).